Here is a 239-residue protein sequence, read N- to C-terminus: 1-(5-phosphoribosyl)-5-[(5-phosphoribosylamino)methylideneamino] imidazole-4-carboxamide isomerase (239 aa).

Asp-8 functions as the Proton acceptor in the catalytic mechanism. Catalysis depends on Asp-129, which acts as the Proton donor.

The protein belongs to the HisA/HisF family.

Its subcellular location is the cytoplasm. The enzyme catalyses 1-(5-phospho-beta-D-ribosyl)-5-[(5-phospho-beta-D-ribosylamino)methylideneamino]imidazole-4-carboxamide = 5-[(5-phospho-1-deoxy-D-ribulos-1-ylimino)methylamino]-1-(5-phospho-beta-D-ribosyl)imidazole-4-carboxamide. Its pathway is amino-acid biosynthesis; L-histidine biosynthesis; L-histidine from 5-phospho-alpha-D-ribose 1-diphosphate: step 4/9. This Bacillus cereus (strain AH187) protein is 1-(5-phosphoribosyl)-5-[(5-phosphoribosylamino)methylideneamino] imidazole-4-carboxamide isomerase.